A 277-amino-acid chain; its full sequence is MGIKHYKPTSPGIRQMTRHTFEELTSTRPEKSLLERLTRKAGRNVYGRITVRHRGGGHKRMYRIIDFKRNEFDGIPAKVVSIEYDPNRTCRIAKVVYANGAKRYILHPVGLNVGDTVVSGPDADIKVGNALPLENIPVGTIVHNIELYPGRGGQLVRSAGASAQIMAKEGRYALLRLPSGEQRKVLLACRATVGQVGNLEHENIVIGKAGRKRHLGFRPAVRGVVMNPVDHPHGGGEGRSPIGMPSPVTPWGKPTLGYKTRKPNKKSDRLIVSRRKK.

The segment at 226-277 is disordered; sequence MNPVDHPHGGGEGRSPIGMPSPVTPWGKPTLGYKTRKPNKKSDRLIVSRRKK.

This sequence belongs to the universal ribosomal protein uL2 family. Part of the 50S ribosomal subunit. Forms a bridge to the 30S subunit in the 70S ribosome.

In terms of biological role, one of the primary rRNA binding proteins. Required for association of the 30S and 50S subunits to form the 70S ribosome, for tRNA binding and peptide bond formation. It has been suggested to have peptidyltransferase activity; this is somewhat controversial. Makes several contacts with the 16S rRNA in the 70S ribosome. This chain is Large ribosomal subunit protein uL2, found in Symbiobacterium thermophilum (strain DSM 24528 / JCM 14929 / IAM 14863 / T).